A 283-amino-acid polypeptide reads, in one-letter code: ATP phosphoribosyltransferase (283 aa).

It belongs to the ATP phosphoribosyltransferase family. Long subfamily. Mg(2+) serves as cofactor.

The protein localises to the cytoplasm. It catalyses the reaction 1-(5-phospho-beta-D-ribosyl)-ATP + diphosphate = 5-phospho-alpha-D-ribose 1-diphosphate + ATP. The protein operates within amino-acid biosynthesis; L-histidine biosynthesis; L-histidine from 5-phospho-alpha-D-ribose 1-diphosphate: step 1/9. With respect to regulation, feedback inhibited by histidine. Its function is as follows. Catalyzes the condensation of ATP and 5-phosphoribose 1-diphosphate to form N'-(5'-phosphoribosyl)-ATP (PR-ATP). Has a crucial role in the pathway because the rate of histidine biosynthesis seems to be controlled primarily by regulation of HisG enzymatic activity. The polypeptide is ATP phosphoribosyltransferase (Bacteroides fragilis (strain ATCC 25285 / DSM 2151 / CCUG 4856 / JCM 11019 / LMG 10263 / NCTC 9343 / Onslow / VPI 2553 / EN-2)).